The primary structure comprises 902 residues: DNA mismatch repair protein MutS (902 aa).

ATP is bound at residue 654–661; sequence GPNMGGKS.

The protein belongs to the DNA mismatch repair MutS family.

In terms of biological role, this protein is involved in the repair of mismatches in DNA. It is possible that it carries out the mismatch recognition step. This protein has a weak ATPase activity. The protein is DNA mismatch repair protein MutS of Xanthomonas axonopodis pv. citri (strain 306).